A 622-amino-acid chain; its full sequence is MTFLQVTIKMVAREASGHSYLVACWQPILILMLGTVLSGSATGCPSRCECSAQERSVVCHRRKLITLPEGIPIDTRLLDLSKNRLKAINPEEFLNYPQLEDLQLNENIISVIEPGAFSNLLGLRTLGLRNNNLKLIQLGVFTGLSNLTRLDISENKIVILLDYMFQELYNLKELEVGDNDLVFISHRAFHGLSSLEQLTMERCNLTSVPTEAFSHLHNLLTLKLRHLNVNVIRDFSFRRLYRLKILEIANWPLLESLTAKSLHGLNITTLSITNCNLTAVPYVAIQHLVYLRFFNLSFNPIEVVEGNKMHNLLRLQAFHLVGGRLVSIEPYSFKGLNYLRVLNVSSNSLSTLEESAFHSVGNLETLALHDNPLACDCRLLWVFRRRWRLNFNRQQPSCETPEFLQGKEFKDFPDVLPPNYFTCQKSKIRDHKAIHRFVDEGTTVQFPCQADGDPTPMIMWQSPKKQFITTKSIGRLSVSLDGTLEVRYAQIQDNGTYTCFAVNAGGNDTRLAHLHVHSYSPNWPHQPNKTFAFILNQPSDNSANGTGAMDPFPFDMKTLIIATTMGFISFLGVVLFCLVLLFLWSRGKGNAKPNIEIEYVPRKVDGENSPNEGSHKISMKMI.

An N-terminal signal peptide occupies residues 1–43; it reads MTFLQVTIKMVAREASGHSYLVACWQPILILMLGTVLSGSATG. Intrachain disulfides connect C44–C50 and C48–C59. Positions 44–73 constitute an LRRNT domain; it reads CPSRCECSAQERSVVCHRRKLITLPEGIPI. The Extracellular segment spans residues 44-563; it reads CPSRCECSAQ…FDMKTLIIAT (520 aa). LRR repeat units follow at residues 74–95, 98–119, 122–143, 146–167, 170–191, 194–215, 218–239, 266–287, 290–311, 314–335, and 338–359; these read DTRLLDLSKNRLKAINPEEFLN, QLEDLQLNENIISVIEPGAFSN, GLRTLGLRNNNLKLIQLGVFTG, NLTRLDISENKIVILLDYMFQE, NLKELEVGDNDLVFISHRAFHG, SLEQLTMERCNLTSVPTEAFSH, NLLTLKLRHLNVNVIRDFSFRR, NITTLSITNCNLTAVPYVAIQH, YLRFFNLSFNPIEVVEGNKMHN, RLQAFHLVGGRLVSIEPYSFKG, and YLRVLNVSSNSLSTLEESAFHS. N146 carries N-linked (GlcNAc...) asparagine glycosylation. N204 carries an N-linked (GlcNAc...) asparagine glycan. N266, N276, and N295 each carry an N-linked (GlcNAc...) asparagine glycan. N343 is a glycosylation site (N-linked (GlcNAc...) asparagine). The LRRCT domain occupies 371–425; that stretch reads NPLACDCRLLWVFRRRWRLNFNRQQPSCETPEFLQGKEFKDFPDVLPPNYFTCQK. 3 disulfide bridges follow: C375–C398, C377–C423, and C448–C499. The 103-residue stretch at 413–515 folds into the Ig-like C2-type domain; that stretch reads PDVLPPNYFT…GNDTRLAHLH (103 aa). N-linked (GlcNAc...) asparagine glycosylation is found at N494, N507, N528, and N544. The helical transmembrane segment at 564–584 threads the bilayer; the sequence is TMGFISFLGVVLFCLVLLFLW. Residues 585–622 are Cytoplasmic-facing; sequence SRGKGNAKPNIEIEYVPRKVDGENSPNEGSHKISMKMI.

Its subcellular location is the cell membrane. Functionally, may play a role in regulating axonal regeneration and plasticity in the adult central nervous system. The polypeptide is Leucine-rich repeat and immunoglobulin-like domain-containing nogo receptor-interacting protein 1-B (lingo1b) (Danio rerio (Zebrafish)).